The following is a 546-amino-acid chain: Membrane protein insertase YidC (546 aa).

A helical transmembrane segment spans residues 6–26 (LILFIVFSFSLLLLWEAWQDK). Positions 31 to 56 (PATRPVAGAPAGSAAPTPSTALNAPA) are disordered. The span at 37–56 (AGAPAGSAAPTPSTALNAPA) shows a compositional bias: low complexity. A run of 4 helical transmembrane segments spans residues 351-371 (LVGN…LALY), 425-445 (LPIL…LAAV), 465-482 (WYIL…QVKL), and 494-514 (IMMI…AGLV).

It belongs to the OXA1/ALB3/YidC family. Type 1 subfamily. As to quaternary structure, interacts with the Sec translocase complex via SecD. Specifically interacts with transmembrane segments of nascent integral membrane proteins during membrane integration.

It localises to the cell inner membrane. Required for the insertion and/or proper folding and/or complex formation of integral membrane proteins into the membrane. Involved in integration of membrane proteins that insert both dependently and independently of the Sec translocase complex, as well as at least some lipoproteins. Aids folding of multispanning membrane proteins. This Thiobacillus denitrificans (strain ATCC 25259 / T1) protein is Membrane protein insertase YidC.